A 183-amino-acid polypeptide reads, in one-letter code: Mast cell-expressed membrane protein 1 (183 aa).

The interval Met1 to Glu26 is disordered. Residues Met1–Met70 lie on the Cytoplasmic side of the membrane. Residues Gly15–Asp24 show a composition bias toward basic and acidic residues. The helical; Signal-anchor for type II membrane protein transmembrane segment at Leu71–Val91 threads the bilayer. The Extracellular portion of the chain corresponds to Lys92–Thr183. A glycan (N-linked (GlcNAc...) asparagine) is linked at Asn109.

The protein localises to the membrane. In Mus musculus (Mouse), this protein is Mast cell-expressed membrane protein 1.